A 580-amino-acid chain; its full sequence is uncharacterized protein (580 aa).

Polar residues predominate over residues 1-44 (MSESSVNADTPKNTNDVLNGAYQSATTEPEGQYRSATDNPSLYQ). Positions 1–45 (MSESSVNADTPKNTNDVLNGAYQSATTEPEGQYRSATDNPSLYQV) are disordered. The residue at position 99 (S99) is a Phosphoserine. 12 helical membrane passes run 143–163 (IYAY…PASA), 177–197 (LLNV…WAPM), 207–227 (LYIG…AQDI), 235–255 (FFGG…FADM), 265–285 (ITIF…VGGF), 295–315 (WTEY…YLFC), 370–390 (PIVF…YLLL), 405–425 (LGVS…GCGI), 450–470 (LPPM…LAWS), 476–496 (VHWI…LLIF), 511–533 (AASV…PLFA), and 546–566 (GSLL…FFFF).

This sequence belongs to the major facilitator superfamily. CAR1 family.

The protein resides in the membrane. This is an uncharacterized protein from Schizosaccharomyces pombe (strain 972 / ATCC 24843) (Fission yeast).